Reading from the N-terminus, the 413-residue chain is Serine hydroxymethyltransferase (413 aa).

(6S)-5,6,7,8-tetrahydrofolate contacts are provided by residues Leu-119 and 123–125; that span reads GHL. Lys-228 is modified (N6-(pyridoxal phosphate)lysine).

This sequence belongs to the SHMT family. In terms of assembly, homodimer. It depends on pyridoxal 5'-phosphate as a cofactor.

The protein resides in the cytoplasm. The catalysed reaction is (6R)-5,10-methylene-5,6,7,8-tetrahydrofolate + glycine + H2O = (6S)-5,6,7,8-tetrahydrofolate + L-serine. It functions in the pathway one-carbon metabolism; tetrahydrofolate interconversion. The protein operates within amino-acid biosynthesis; glycine biosynthesis; glycine from L-serine: step 1/1. Functionally, catalyzes the reversible interconversion of serine and glycine with tetrahydrofolate (THF) serving as the one-carbon carrier. This reaction serves as the major source of one-carbon groups required for the biosynthesis of purines, thymidylate, methionine, and other important biomolecules. Also exhibits THF-independent aldolase activity toward beta-hydroxyamino acids, producing glycine and aldehydes, via a retro-aldol mechanism. This is Serine hydroxymethyltransferase from Caldanaerobacter subterraneus subsp. tengcongensis (strain DSM 15242 / JCM 11007 / NBRC 100824 / MB4) (Thermoanaerobacter tengcongensis).